The primary structure comprises 307 residues: Histone deacetylase HDT1 (307 aa).

Residues 98 to 112 (EDEMDLDSEDEDEEL) are compositionally biased toward acidic residues. The interval 98 to 280 (EDEMDLDSED…KSGGSVPCKP (183 aa)) is disordered. A compositionally biased stretch (basic and acidic residues) spans 119 to 132 (ENGKADEKKQKSQE). Positions 151 to 197 (DDDSDEDETDDSDEDETDDSDEGLSSEEGDDDSSDEDDTSDDEEEDT) are enriched in acidic residues. The segment covering 198–211 (PTPKKPEVGKKRPA) has biased composition (basic and acidic residues). Residues 265 to 277 (SPKSAPKSGGSVP) are compositionally biased toward low complexity. The C2H2-type; degenerate zinc finger occupies 276-299 (VPCKPCSKSFISETALQAHSRAKM).

The protein belongs to the histone deacetylase HD2 family. As to quaternary structure, multimer. Isolated as a trimer composed of 3 proteins of 39, 42 and 45 kDa, possibly a homotrimer with different phosphorylation status or a heterotrimer with HDT2 and/or HDT3. In terms of processing, the N-terminus is blocked. Post-translationally, phosphorylated. Required for enzyme activity.

It is found in the nucleus. The protein resides in the nucleolus. Inhibited by 3-(4-Aroyl-1-methyl-1H-pyrrol-2-yl)-N-hydroxy-2-propenamides. 3-(1-methyl-4-phenylacetyl-1H-pyrrol-2-yl)-N-hydroxy-2-propenamide 1b and 3-[1-methyl-4-(3-phenyl-2-propenoyl)-1H-pyrrol-2-yl]-N-hydroxy-2-propenamide 1c are very potent inhibitors. Mediates the deacetylation of lysine residues on the N-terminal part of the core histones (H2A, H2B, H3 and H4). Histone deacetylation gives a tag for epigenetic repression and plays an important role in transcriptional regulation, cell cycle progression and developmental events. Able to deacetylate all 4 core histones. This Zea mays (Maize) protein is Histone deacetylase HDT1 (HDT1).